The sequence spans 1200 residues: MERNLQKQLYGISRESSPGARRYSMPAASADSTRKSIFGGSASCAQMSGSLKRTALTNSRLSLSVRSTQSIAGIRSDYNSVESFGCPLPVVVNEALTFAGPGAGTVTAKVTQNGWAWVVQGRRLLIWQYKDTAKSGSPPRVGKLARRGGGLAQCRELTLPYSDLGHKSDLISVFQTEGQQMASCIAVSATGEVRYWSSIAHDGNSVDLSILTGQEFVQLLSLPTQQGYLAVTTTCNLVFLRVGLTNGRYTLHHKTIKPATSFLGGFGKKFASILIGMNTGADKDQTLVGMCCESNLESGETIVAVLSDRAIQRWSLSNNGNTENLLYEDADMLRRIREEFITNFWKFRLPADSLEIDLHLLDFHVVKNKAYILAGAVNAAHAPQMCYALVTGTAQAERMLLESFTPLNMNKFFSAKTEEDCLSVRFVVGSSHIYLYTSKVVYPLHLTNSVPTAELEAEKIEFHQHDDRILSAVICSQLPLFFSRTHGLVSITPGDFDGTEMMNMSSCNTPDLYAPNSCNASFAVADHSALTNSTNNLHLFELDPDEMYNELSDEVGQLKAAFLYHMKRNSNMVKTIVDELLRNVTAADPSGAPMDAYKLDRIVITIAEDLAEDIPIADPRWEEALADQEMNRHAIGSSRSMQIINQLRDKIIAFQHFITFLHSSLVWDKLNVIPCGSHSLKPTGCILADISEKIVAAMALRSIQTKLPKLIEEAIDATVALWHEEPQGSLTYQDIFYVKLSRFQNVFEALADIADDRIAAQNQTTISVAHFVNEINSIVLDVLGQVFKYRKQHASSFRLSHEKLPSYENLPWTAMAGSAGVRDTLTRLIDISVRYGSHCVSETELKQQLYQQIFELIDLVLDGRKTYLKSVRDTEKFNVLQQQFEAQRRELISVLIKDRQYEYAAKIAEKYLDFQSLVLICDETQDKERLEDYTRKYEEYDFSQFAINWHLRQNRHGEVFERFKGNQTALAQFMRDHPSLGWIQLIFNGDFERAAKVLYELAQCETEFVARKKSMLSLAKLAAFAAAESDLTAQVEKINADLTLVEYQSQLGHDVLESFGFDPAEQKVLKAEEIISLYIAEENETASETEFRKALELLSYVEQPYDMRHKIWCAAIKRDNWTDYDPNNAVHYMQKLLFYKIIEISQLMGNDSENVLPPMEDFLESVELGDLPQQKPFQYLLKLTYEYVADMFKQPDDMEL.

A disordered region spans residues 1–28 (MERNLQKQLYGISRESSPGARRYSMPAA).

It belongs to the nucleoporin Nup133 family. In terms of assembly, forms part of the Nup107-Nup160 subcomplex in the nuclear pore.

The protein resides in the nucleus. Its subcellular location is the nuclear pore complex. Probable component of the nuclear pore complex (NPC). Plays a role in NPC assembly and/or maintenance. The polypeptide is Nuclear pore complex protein Nup133 (Drosophila melanogaster (Fruit fly)).